Reading from the N-terminus, the 194-residue chain is Adenylate kinase (194 aa).

10–15 (GAGKGT) is a binding site for ATP. Residues 30–59 (STGDMLRAAVAQQSEIGKRAKAVMDAGQLV) are NMP. Residues T31, R36, 57-59 (QLV), 85-88 (GYPR), and Q92 contribute to the AMP site. Positions 126–142 (SRVAETIAKGGQVRSDD) are LID. Position 127 (R127) interacts with ATP. Residues R139 and R150 each contribute to the AMP site. A178 contributes to the ATP binding site.

It belongs to the adenylate kinase family. In terms of assembly, monomer.

It is found in the cytoplasm. It catalyses the reaction AMP + ATP = 2 ADP. It participates in purine metabolism; AMP biosynthesis via salvage pathway; AMP from ADP: step 1/1. Its function is as follows. Catalyzes the reversible transfer of the terminal phosphate group between ATP and AMP. Plays an important role in cellular energy homeostasis and in adenine nucleotide metabolism. The polypeptide is Adenylate kinase (Brucella anthropi (strain ATCC 49188 / DSM 6882 / CCUG 24695 / JCM 21032 / LMG 3331 / NBRC 15819 / NCTC 12168 / Alc 37) (Ochrobactrum anthropi)).